A 640-amino-acid chain; its full sequence is Probable potassium transport system protein Kup 2 (640 aa).

12 helical membrane passes run 19 to 39 (LFSS…YGDI), 67 to 87 (VLSL…VVFV), 118 to 138 (GVVA…GVIT), 155 to 175 (EAAK…LFLV), 181 to 201 (GVIG…IAAL), 230 to 250 (FVGV…EALY), 265 to 285 (WLGL…ALLL), 307 to 327 (MVCL…SGVF), 355 to 375 (VYIP…VLVF), 384 to 404 (AYGI…FFVI), 415 to 435 (AVPL…ANLF), and 437 to 457 (IFDG…SMIT).

Belongs to the HAK/KUP transporter (TC 2.A.72) family.

The protein localises to the cell inner membrane. It carries out the reaction K(+)(in) + H(+)(in) = K(+)(out) + H(+)(out). Functionally, transport of potassium into the cell. Likely operates as a K(+):H(+) symporter. This Syntrophobacter fumaroxidans (strain DSM 10017 / MPOB) protein is Probable potassium transport system protein Kup 2.